Reading from the N-terminus, the 391-residue chain is Chaperone protein DnaJ (391 aa).

Positions 4–68 constitute a J domain; it reads DFYDVLGVSR…ETRQQYDQLG (65 aa). The span at 53–79 shows a compositional bias: basic and acidic residues; it reads DVLTDEETRQQYDQLGHERFEEAEKRG. Disordered regions lie at residues 53-94 and 117-136; these read DVLT…MGGA and FFGG…EQGR. Gly residues-rich tracts occupy residues 81-94 and 119-129; these read TGNG…MGGA and GGAGGGGGRGR. A CR-type zinc finger spans residues 152–234; sequence GVSKQVTVRR…CGGQGQTRER (83 aa). Zn(2+)-binding residues include C165, C168, C182, C185, C208, C211, C222, and C225. CXXCXGXG motif repeat units follow at residues 165–172, 182–189, 208–215, and 222–229; these read CADCGGSG, CPQCDGQG, CSRCGGEG, and CSTCGGQG.

The protein belongs to the DnaJ family. In terms of assembly, homodimer. Requires Zn(2+) as cofactor.

Its subcellular location is the cytoplasm. Its function is as follows. Participates actively in the response to hyperosmotic and heat shock by preventing the aggregation of stress-denatured proteins and by disaggregating proteins, also in an autonomous, DnaK-independent fashion. Unfolded proteins bind initially to DnaJ; upon interaction with the DnaJ-bound protein, DnaK hydrolyzes its bound ATP, resulting in the formation of a stable complex. GrpE releases ADP from DnaK; ATP binding to DnaK triggers the release of the substrate protein, thus completing the reaction cycle. Several rounds of ATP-dependent interactions between DnaJ, DnaK and GrpE are required for fully efficient folding. Also involved, together with DnaK and GrpE, in the DNA replication of plasmids through activation of initiation proteins. The sequence is that of Chaperone protein DnaJ from Halobacterium salinarum (strain ATCC 29341 / DSM 671 / R1).